The primary structure comprises 66 residues: Protein translocase subunit SecE (66 aa).

Residues 29–49 form a helical membrane-spanning segment; sequence LIASTLVVVAAVFIFSLICLV.

Belongs to the SecE/SEC61-gamma family. As to quaternary structure, component of the Sec protein translocase complex. Heterotrimer consisting of SecY, SecE and SecG subunits. The heterotrimers can form oligomers, although 1 heterotrimer is thought to be able to translocate proteins. Interacts with the ribosome. Interacts with SecDF, and other proteins may be involved. Interacts with SecA.

It localises to the cell inner membrane. Functionally, essential subunit of the Sec protein translocation channel SecYEG. Clamps together the 2 halves of SecY. May contact the channel plug during translocation. In Rickettsia typhi (strain ATCC VR-144 / Wilmington), this protein is Protein translocase subunit SecE.